Here is a 556-residue protein sequence, read N- to C-terminus: CBS domain-containing protein CBSCBSPB3 (556 aa).

Polar residues-rich tracts occupy residues 1 to 20 and 30 to 44; these read MSTQ…NSTV and PVQS…NTSK. The segment at 1-63 is disordered; sequence MSTQATGPSS…SQAPSNGERT (63 aa). Serine 2 carries the N-acetylserine modification. CBS domains follow at residues 68 to 127, 134 to 189, 235 to 294, and 302 to 360; these read RLSK…RPDQ, MTRN…RMEK, ITDN…LSPE, and MTPN…ENSS. The 89-residue stretch at 414 to 502 folds into the PB1 domain; that stretch reads GNSFSFKFED…KVLRLHLDFT (89 aa). A helical transmembrane segment spans residues 527 to 549; it reads WVSWRGGVVVTGAVVLTSIAIVV.

The protein localises to the membrane. The chain is CBS domain-containing protein CBSCBSPB3 (CBSCBSPB3) from Arabidopsis thaliana (Mouse-ear cress).